We begin with the raw amino-acid sequence, 255 residues long: Geranylgeranylglyceryl phosphate synthase (255 aa).

Mg(2+) is bound by residues Asp-34 and Thr-64. Residues 182-188, 213-214, and 235-236 contribute to the sn-glycerol 1-phosphate site; these read YLEAGSG, GG, and GN.

This sequence belongs to the GGGP/HepGP synthase family. Group II subfamily. Requires Mg(2+) as cofactor.

The protein localises to the cytoplasm. It carries out the reaction sn-glycerol 1-phosphate + (2E,6E,10E)-geranylgeranyl diphosphate = sn-3-O-(geranylgeranyl)glycerol 1-phosphate + diphosphate. The protein operates within membrane lipid metabolism; glycerophospholipid metabolism. In terms of biological role, prenyltransferase that catalyzes the transfer of the geranylgeranyl moiety of geranylgeranyl diphosphate (GGPP) to the C3 hydroxyl of sn-glycerol-1-phosphate (G1P). This reaction is the first ether-bond-formation step in the biosynthesis of archaeal membrane lipids. The protein is Geranylgeranylglyceryl phosphate synthase of Saccharolobus solfataricus (strain ATCC 35092 / DSM 1617 / JCM 11322 / P2) (Sulfolobus solfataricus).